Here is a 1182-residue protein sequence, read N- to C-terminus: NACHT, LRR and PYD domains-containing protein 1a (1182 aa).

Residues 1-23 are disordered; the sequence is MEESQSKQESSTKVAQHEGQEDV. The NACHT domain occupies 133-442; it reads QLVIIEGAAG…EFFAAMSYIL (310 aa). 139-146 contacts ATP; it reads GAAGIGKS. LRR repeat units lie at residues 634-655, 691-711, and 720-743; these read NLEE…SLCT, SLTE…KMLC, and NLSI…RTLE. Positions 780–806 are disordered; the sequence is QQRQQSGDKHMEPLGTEDEFWGPTGPV. The ZU5 stretch occupies residues 799 to 932; the sequence is FWGPTGPVTT…HYAVLENPSF (134 aa). Residues 799–1082 form the FIIND domain; that stretch reads FWGPTGPVTT…LRPALPKIAT (284 aa). Positions 933–1082 are UPA; that stretch reads SPMGILLRMI…LRPALPKIAT (150 aa). Residues 1092–1175 enclose the CARD domain; the sequence is HFMDQHREQL…HLVMDILEKL (84 aa).

The protein belongs to the NLRP family. In terms of assembly, interacts (via LRR repeats) with BCL2 and BCL2L1 (via the loop between motifs BH4 and BH3). Interacts with NOD2; this interaction is enhanced in the presence of muramyl dipeptide (MDP) and increases IL1B release. Interacts with EIF2AK2/PKR; this interaction requires EIF2AK2 activity, is accompanied by EIF2AK2 autophosphorylation and promotes inflammasome assembly in response to danger-associated signals. Interacts with MEFV; this interaction targets Nlrp1a to degradation by autophagy, hence preventing excessive IL1B- and IL18-mediated inflammation. Interacts with DPP9; leading to inhibit activation of the inflammasome. DPP9 acts via formation of a ternary complex, composed of a DPP9 homodimer, one full-length Nlrp1a protein, and one cleaved C-terminus of Nlrp1a (NACHT, LRR and PYD domains-containing protein 1a, C-terminus). Interacts with DPP8; leading to inhibit activation of the inflammasome, probably via formation of a ternary complex with DPP8. Interacts with the C-terminal part of Nlrp1a (NACHT, LRR and PYD domains-containing protein 1a, C-terminus) in absence of pathogens and other damage-associated signals. As to quaternary structure, interacts with the N-terminal part of Nlrp1a (NACHT, LRR and PYD domains-containing protein 1a, N-terminus) in absence of pathogens and other damage-associated signals. Homomultimer; forms the Nlrp1a inflammasome polymeric complex, a filament composed of homopolymers of this form in response to pathogens and other damage-associated signals. Interacts (via CARD domain) with CASP1 (via CARD domain); leading to CASP1 activation. Post-translationally, autocatalytically cleaved. Autocatalytic cleavage in FIIND region occurs constitutively, prior to activation signals, and is required for inflammasome activity (IL1B release), possibly by facilitating CASP1 binding. Both N- and C-terminal parts remain associated non-covalently. In terms of processing, ubiquitinated in response to pathogen-associated signals, leading to its degradation by the proteasome and subsequent release of the cleaved C-terminal part of the protein (NACHT, LRR and PYD domains-containing protein 1a, C-terminus), which polymerizes and forms the Nlrp1a inflammasome. As to expression, highly expressed in hematopoietic stem cells and progenitor cells of both myeloid and lymphoid origin. The expression is highly strain-dependent. Not expressed in Balb/cJ animals, but widely expressed in C57BL/6J. Expressed in macrophages resistant to Bacillus anthracis lethal toxin, but not in toxin-sensitive macrophages, except in CAST/EiJ strain.

It is found in the cytoplasm. The protein localises to the cytosol. It localises to the nucleus. The protein resides in the inflammasome. With respect to regulation, nlrp1a inflammasome is activated by pathogens and other damage-associated signals: activation promotes ubiquitination and degradation of the N-terminal part, releasing the cleaved C-terminal part of the protein (NACHT, LRR and PYD domains-containing protein 1a, C-terminus), which polymerizes and forms the Nlrp1a inflammasome. Nlrp1a inflammasome is inhibited by DPP8 and DPP9, which sequester the C-terminal fragment of Nlrp1a (NACHT, LRR and PYD domains-containing protein 1a, C-terminus) in a ternary complex, thereby preventing Nlrp1a oligomerization and activation. Nlrp1a inflammasome is activated by Val-boroPro (Talabostat, PT-100), an inhibitor of dipeptidyl peptidases DPP8 and DPP9. Val-boroPro relieves inhibition of DPP8 and/or DPP9 by promoting disruption of the ternary complex, releasing its C-terminal part from autoinhibition. Its function is as follows. Acts as the sensor component of the Nlrp1a inflammasome, which mediates inflammasome activation in response to various pathogen-associated signals, leading to subsequent pyroptosis. Inflammasomes are supramolecular complexes that assemble in the cytosol in response to pathogens and other damage-associated signals and play critical roles in innate immunity and inflammation. Acts as a recognition receptor (PRR): recognizes specific pathogens and other damage-associated signals, and mediates the formation of the inflammasome polymeric complex. In response to pathogen-associated signals, the N-terminal part of Nlrp1a is degraded by the proteasome, releasing the cleaved C-terminal part of the protein (NACHT, LRR and PYD domains-containing protein 1a, C-terminus), which polymerizes to initiate the formation of the inflammasome complex: the inflammasome recruits pro-caspase-1 (proCASP1) and promotes caspase-1 (CASP1) activation, which subsequently cleaves and activates inflammatory cytokines IL1B and IL18 and gasdermin-D (GSDMD), leading to pyroptosis. In the absence of GSDMD expression, the Nlrp1a inflammasome is able to recruit and activate CASP8, leading to activation of gasdermin-E (GSDME). Activation of Nlrp1a inflammasome is also required for HMGB1 secretion; the active cytokines and HMGB1 stimulate inflammatory responses. When activated in the bone marrow, induces the pyroptosis of hematopoietic stem cells and progenitor cells of both myeloid and lymphoid lineages, hence allowing the removal of damaged cells, and the release of IL1B, which induces granulopoiesis. Functionally, constitutes the precursor of the Nlrp1a inflammasome, which mediates autoproteolytic processing within the FIIND domain to generate the N-terminal and C-terminal parts, which are associated non-covalently in absence of pathogens and other damage-associated signals. In terms of biological role, regulatory part that prevents formation of the Nlrp1a inflammasome: in absence of pathogens and other damage-associated signals, interacts with the C-terminal part of Nlrp1a (NACHT, LRR and PYD domains-containing protein 1a, C-terminus), preventing activation of the Nlrp1a inflammasome. In response to pathogen-associated signals, this part is ubiquitinated and degraded by the proteasome, releasing the cleaved C-terminal part of the protein, which polymerizes and forms the Nlrp1a inflammasome. Constitutes the active part of the Nlrp1a inflammasome. In absence of pathogens and other damage-associated signals, interacts with the N-terminal part of Nlrp1a (NACHT, LRR and PYD domains-containing protein 1a, N-terminus), preventing activation of the Nlrp1a inflammasome. In response to pathogen-associated signals, the N-terminal part of Nlrp1a is degraded by the proteasome, releasing this form, which polymerizes to form the Nlrp1a inflammasome complex: the Nlrp1a inflammasome complex then directly recruits pro-caspase-1 (proCASP1) and promotes caspase-1 (CASP1) activation, leading to gasdermin-D (GSDMD) cleavage and subsequent pyroptosis. The sequence is that of NACHT, LRR and PYD domains-containing protein 1a from Mus musculus (Mouse).